Here is a 124-residue protein sequence, read N- to C-terminus: UPF0102 protein Msil_0293 (124 aa).

The protein belongs to the UPF0102 family.

This chain is UPF0102 protein Msil_0293, found in Methylocella silvestris (strain DSM 15510 / CIP 108128 / LMG 27833 / NCIMB 13906 / BL2).